Consider the following 270-residue polypeptide: UPF0246 protein Psyc_0554 (270 aa).

Belongs to the UPF0246 family.

This is UPF0246 protein Psyc_0554 from Psychrobacter arcticus (strain DSM 17307 / VKM B-2377 / 273-4).